The chain runs to 308 residues: Elongation factor Ts (308 aa).

An involved in Mg(2+) ion dislocation from EF-Tu region spans residues T80–V83.

This sequence belongs to the EF-Ts family.

The protein resides in the cytoplasm. Functionally, associates with the EF-Tu.GDP complex and induces the exchange of GDP to GTP. It remains bound to the aminoacyl-tRNA.EF-Tu.GTP complex up to the GTP hydrolysis stage on the ribosome. The protein is Elongation factor Ts of Rhizobium etli (strain ATCC 51251 / DSM 11541 / JCM 21823 / NBRC 15573 / CFN 42).